Reading from the N-terminus, the 98-residue chain is uncharacterized protein (98 aa).

A disordered region spans residues 77-98; it reads SERAGEEVPPLAVAGSDDGHDH.

This sequence to M.tuberculosis Rv1991c and Rv3269.

This is an uncharacterized protein from Mycobacterium bovis (strain ATCC BAA-935 / AF2122/97).